The sequence spans 658 residues: Exoribonuclease 2 (658 aa).

An RNB domain is found at 189–530 (REDLTSLYFT…VNHRLIKQVL (342 aa)). Positions 576-658 (AVEFDCEIAD…ETRSIVGNII (83 aa)) constitute an S1 motif domain.

This sequence belongs to the RNR ribonuclease family. RNase II subfamily.

Its subcellular location is the cytoplasm. It catalyses the reaction Exonucleolytic cleavage in the 3'- to 5'-direction to yield nucleoside 5'-phosphates.. Its function is as follows. Involved in mRNA degradation. Hydrolyzes single-stranded polyribonucleotides processively in the 3' to 5' direction. This chain is Exoribonuclease 2, found in Actinobacillus pleuropneumoniae serotype 7 (strain AP76).